A 125-amino-acid polypeptide reads, in one-letter code: Large ribosomal subunit protein bL12 (125 aa).

The protein belongs to the bacterial ribosomal protein bL12 family. Homodimer. Part of the 50S ribosomal subunit; present in 6 copies per ribosome. Forms part of the ribosomal stalk which helps the ribosome interact with GTP-bound translation factors. Forms a heptameric L10(L12)2(L12)2(L12)2 complex, where L10 forms an elongated spine to which 3 L12 dimers bind in a sequential fashion.

Functionally, forms part of the ribosomal stalk which helps the ribosome interact with GTP-bound translation factors. Is thus essential for accurate translation. The chain is Large ribosomal subunit protein bL12 from Agrobacterium fabrum (strain C58 / ATCC 33970) (Agrobacterium tumefaciens (strain C58)).